A 293-amino-acid chain; its full sequence is Fructokinase (293 aa).

Threonine 133 contributes to the ATP binding site. The Zn(2+) site is built by histidine 156, cysteine 174, histidine 177, and cysteine 180. ATP-binding positions include proline 188 and glycine 236–glutamine 240.

Belongs to the ROK (NagC/XylR) family. Mg(2+) is required as a cofactor.

The catalysed reaction is D-fructose + ATP = D-fructose 6-phosphate + ADP + H(+). With respect to regulation, inhibition by zinc ions. The chain is Fructokinase (scrK) from Streptococcus mutans serotype c (strain ATCC 700610 / UA159).